A 218-amino-acid chain; its full sequence is Urease accessory protein UreG (218 aa).

22–29 (GPVGSGKT) lines the GTP pocket.

Belongs to the SIMIBI class G3E GTPase family. UreG subfamily. In terms of assembly, homodimer. UreD, UreF and UreG form a complex that acts as a GTP-hydrolysis-dependent molecular chaperone, activating the urease apoprotein by helping to assemble the nickel containing metallocenter of UreC. The UreE protein probably delivers the nickel.

Its subcellular location is the cytoplasm. Facilitates the functional incorporation of the urease nickel metallocenter. This process requires GTP hydrolysis, probably effectuated by UreG. This Polaromonas naphthalenivorans (strain CJ2) protein is Urease accessory protein UreG.